Reading from the N-terminus, the 164-residue chain is MFMIEVEIFPHRYLKASTTEKFLNKIYDLKTVERVVIHGQPLPKVITYGPARGLPVNHTERKIIHVKGVPVELTVMAGRFWITLSDDSELDKLDEICKEMFPFGYNLRVGKFLKDRPTVTDYIKYGEDGVFLINEMDRRLIGMVDPRSRMANSVTVVEKEEKEE.

MCR is composed of three subunits: alpha, beta, and gamma. The function of proteins C and D is not known.

In Methanocaldococcus jannaschii (strain ATCC 43067 / DSM 2661 / JAL-1 / JCM 10045 / NBRC 100440) (Methanococcus jannaschii), this protein is Methyl-coenzyme M reductase I operon protein D (mcrD).